A 524-amino-acid polypeptide reads, in one-letter code: Protein tweety homolog 3 (524 aa).

The Extracellular portion of the chain corresponds to 1 to 42; that stretch reads MAGVSYAAPWWVSLLHRLPHFDLRWEATSSQFRPEDADYQQA. The helical transmembrane segment at 43–63 threads the bilayer; the sequence is LLLLGATALACLALDLLFLLF. Over 64–86 the chain is Cytoplasmic; sequence YSFWLCCRRRKTDEHLDADCCCT. Residues 87–107 traverse the membrane as a helical segment; it reads AWCVIITTLVCSAGIAVGFYG. Residues 108-211 lie on the Extracellular side of the membrane; it reads NGETSDGIHR…VDLYDWYRWL (104 aa). Positions 110 and 113 each coordinate Ca(2+). N-linked (GlcNAc...) asparagine glycans are attached at residues Asn126 and Asn144. Residues 212–232 traverse the membrane as a helical segment; it reads GYLGLLLLDVIICLLVLVGLI. The Cytoplasmic portion of the chain corresponds to 233 to 236; that stretch reads RSSK. The helical transmembrane segment at 237–257 threads the bilayer; sequence GILVGVCLLGVLALVISWGAL. Topologically, residues 258-386 are extracellular; it reads GLELAVSVGS…LTGFCYDGVE (129 aa). Cystine bridges form between Cys271/Cys381 and Cys299/Cys366. Asn351 is a glycosylation site (N-linked (GlcNAc...) asparagine). Residues 387–407 traverse the membrane as a helical segment; sequence GLIYLALFSFVTALMFSSIVC. The Cytoplasmic portion of the chain corresponds to 408 to 524; sequence SIPHTWQQKR…PRPDSSGSGH (117 aa). 2 disordered regions span residues 413–435 and 485–524; these read WQQK…RQAH and RCEN…GSGH. Phosphoserine is present on Ser496. The PY-motif; mediates interaction with NEDD4L signature appears at 498-501; the sequence is PPSY. The segment covering 501–524 has biased composition (polar residues); it reads YTSSMRAKYLATSQPRPDSSGSGH. A phosphoserine mark is found at Ser504 and Ser522.

This sequence belongs to the tweety family. As to quaternary structure, homotetramer; disulfide-linked. Forms cis-homodimers in the presence of Ca(2+). Interacts with NEDD4L. Ubiquitinated by NEDD4L. Post-translationally, N-glycosylated. Expressed in excitable tissues. Expressed in the brain, heart, skeletal muscle, colon, spleen, kidney and peripheral blood leukocytes. Also expressed in fat, the pancreas, thymus, and uterus.

The protein resides in the cell membrane. The catalysed reaction is chloride(in) = chloride(out). It carries out the reaction L-glutamate(out) = L-glutamate(in). With respect to regulation, inhibited by (4-[(2-butyl-6,7-dichloro-2- cyclopentyl-2,3-dihydro-1-oxo-1H-inden-5-yl)oxy]butanoic acid), genistein and PD98059 (MEK1 inhibitor). Functionally, calcium-independent, swelling-dependent volume-regulated anion channel (VRAC-swell) which plays a pivotal role in the process of regulatory volume decrease (RVD) in the brain through the efflux of anions like chloride and organic osmolytes like glutamate. Probable large-conductance Ca(2+)-activated chloride channel. This chain is Protein tweety homolog 3 (Ttyh3), found in Mus musculus (Mouse).